The following is a 188-amino-acid chain: Adenylate kinase (188 aa).

An ATP-binding site is contributed by 12–17 (GVGKGT). The segment at 32–61 (STGDIFRSAMANHTELGDKAKSFMDAGNLV) is NMP. Residues threonine 33, arginine 38, 59–61 (NLV), 89–92 (GYPR), and glutamine 96 each bind AMP. Residues 130–136 (GRGREDD) form an LID region. Arginine 131 provides a ligand contact to ATP. AMP contacts are provided by arginine 133 and arginine 144. Glycine 172 is a binding site for ATP.

It belongs to the adenylate kinase family. In terms of assembly, monomer.

It localises to the cytoplasm. It catalyses the reaction AMP + ATP = 2 ADP. It participates in purine metabolism; AMP biosynthesis via salvage pathway; AMP from ADP: step 1/1. Catalyzes the reversible transfer of the terminal phosphate group between ATP and AMP. Plays an important role in cellular energy homeostasis and in adenine nucleotide metabolism. This is Adenylate kinase from Oenococcus oeni (strain ATCC BAA-331 / PSU-1).